The chain runs to 154 residues: 17.6 kDa class I heat shock protein (154 aa).

The sHSP domain maps to Glu40–Gly154.

The protein belongs to the small heat shock protein (HSP20) family. Forms oligomeric structures.

The protein localises to the cytoplasm. The protein is 17.6 kDa class I heat shock protein of Solanum peruvianum (Peruvian tomato).